Here is a 502-residue protein sequence, read N- to C-terminus: NAD(P)H-quinone oxidoreductase chain 4, chloroplastic (502 aa).

The next 14 membrane-spanning stretches (helical) occupy residues 4 to 24, 37 to 57, 86 to 106, 113 to 131, 136 to 156, 169 to 189, 210 to 230, 244 to 264, 274 to 294, 307 to 327, 332 to 352, 388 to 408, 418 to 438, and 464 to 484; these read FPWL…IFFV, YTIC…CYHF, GLSI…TLAA, SRLF…VGSF, LLLF…LLSM, FILY…GMGL, GLEI…SPII, HYST…YGLV, AHSI…IYAA, IAYS…SITD, GAIL…FLAG, LALP…GIIT, IVIS…SLSM, and LFVS…PDFV.

Belongs to the complex I subunit 4 family.

The protein localises to the plastid. It localises to the chloroplast thylakoid membrane. The enzyme catalyses a plastoquinone + NADH + (n+1) H(+)(in) = a plastoquinol + NAD(+) + n H(+)(out). It catalyses the reaction a plastoquinone + NADPH + (n+1) H(+)(in) = a plastoquinol + NADP(+) + n H(+)(out). This Calycanthus floridus var. glaucus (Eastern sweetshrub) protein is NAD(P)H-quinone oxidoreductase chain 4, chloroplastic.